The sequence spans 370 residues: Anhydro-N-acetylmuramic acid kinase (370 aa).

Gly-13–Asp-20 contributes to the ATP binding site.

It belongs to the anhydro-N-acetylmuramic acid kinase family.

The catalysed reaction is 1,6-anhydro-N-acetyl-beta-muramate + ATP + H2O = N-acetyl-D-muramate 6-phosphate + ADP + H(+). It functions in the pathway amino-sugar metabolism; 1,6-anhydro-N-acetylmuramate degradation. It participates in cell wall biogenesis; peptidoglycan recycling. In terms of biological role, catalyzes the specific phosphorylation of 1,6-anhydro-N-acetylmuramic acid (anhMurNAc) with the simultaneous cleavage of the 1,6-anhydro ring, generating MurNAc-6-P. Is required for the utilization of anhMurNAc either imported from the medium or derived from its own cell wall murein, and thus plays a role in cell wall recycling. This Vibrio vulnificus (strain CMCP6) protein is Anhydro-N-acetylmuramic acid kinase.